We begin with the raw amino-acid sequence, 1368 residues long: DNA-directed RNA polymerase subunit beta (1368 aa).

This sequence belongs to the RNA polymerase beta chain family. As to quaternary structure, the RNAP catalytic core consists of 2 alpha, 1 beta, 1 beta' and 1 omega subunit. When a sigma factor is associated with the core the holoenzyme is formed, which can initiate transcription.

It carries out the reaction RNA(n) + a ribonucleoside 5'-triphosphate = RNA(n+1) + diphosphate. Functionally, DNA-dependent RNA polymerase catalyzes the transcription of DNA into RNA using the four ribonucleoside triphosphates as substrates. This is DNA-directed RNA polymerase subunit beta from Legionella pneumophila (strain Corby).